A 231-amino-acid chain; its full sequence is ATP phosphoribosyltransferase (231 aa).

The protein belongs to the ATP phosphoribosyltransferase family. Short subfamily. As to quaternary structure, heteromultimer composed of HisG and HisZ subunits.

The protein localises to the cytoplasm. It carries out the reaction 1-(5-phospho-beta-D-ribosyl)-ATP + diphosphate = 5-phospho-alpha-D-ribose 1-diphosphate + ATP. The protein operates within amino-acid biosynthesis; L-histidine biosynthesis; L-histidine from 5-phospho-alpha-D-ribose 1-diphosphate: step 1/9. Functionally, catalyzes the condensation of ATP and 5-phosphoribose 1-diphosphate to form N'-(5'-phosphoribosyl)-ATP (PR-ATP). Has a crucial role in the pathway because the rate of histidine biosynthesis seems to be controlled primarily by regulation of HisG enzymatic activity. The polypeptide is ATP phosphoribosyltransferase (Brucella ovis (strain ATCC 25840 / 63/290 / NCTC 10512)).